A 244-amino-acid chain; its full sequence is uncharacterized protein (244 aa).

Basic and acidic residues-rich tracts occupy residues 1-10 and 100-127; these read MNDPFARMET and GTRG…HGEE. Disordered regions lie at residues 1-79, 100-130, and 219-244; these read MNDP…GEEL, GTRG…EPNY, and TGAS…EIKL.

This is an uncharacterized protein from Homo sapiens (Human).